Here is a 427-residue protein sequence, read N- to C-terminus: Serine--tRNA ligase (427 aa).

Position 231 to 233 (231 to 233) interacts with L-serine; that stretch reads TAE. Residue 262–264 coordinates ATP; sequence RSE. Glu-285 lines the L-serine pocket. 349–352 contributes to the ATP binding site; that stretch reads EISS. Position 385 (Ser-385) interacts with L-serine.

It belongs to the class-II aminoacyl-tRNA synthetase family. Type-1 seryl-tRNA synthetase subfamily. Homodimer. The tRNA molecule binds across the dimer.

The protein localises to the cytoplasm. It carries out the reaction tRNA(Ser) + L-serine + ATP = L-seryl-tRNA(Ser) + AMP + diphosphate + H(+). The enzyme catalyses tRNA(Sec) + L-serine + ATP = L-seryl-tRNA(Sec) + AMP + diphosphate + H(+). It functions in the pathway aminoacyl-tRNA biosynthesis; selenocysteinyl-tRNA(Sec) biosynthesis; L-seryl-tRNA(Sec) from L-serine and tRNA(Sec): step 1/1. Catalyzes the attachment of serine to tRNA(Ser). Is also able to aminoacylate tRNA(Sec) with serine, to form the misacylated tRNA L-seryl-tRNA(Sec), which will be further converted into selenocysteinyl-tRNA(Sec). In Allorhizobium ampelinum (strain ATCC BAA-846 / DSM 112012 / S4) (Agrobacterium vitis (strain S4)), this protein is Serine--tRNA ligase.